The primary structure comprises 164 residues: uncharacterized protein (164 aa).

The segment at 144–164 (GFISPEKEHESEDMTSQSLVA) is disordered.

This is an uncharacterized protein from Synechocystis sp. (strain ATCC 27184 / PCC 6803 / Kazusa).